Consider the following 411-residue polypeptide: tRNA pseudouridine synthase Pus10 (411 aa).

Residues 65 to 192 (ALAKCHLPTR…SGQVKVVRNP (128 aa)) form the THUMP domain. Residue D244 is the Nucleophile of the active site. Residues Y305 and Y376 each coordinate substrate.

Belongs to the pseudouridine synthase Pus10 family.

It catalyses the reaction uridine(54) in tRNA = pseudouridine(54) in tRNA. The catalysed reaction is uridine(55) in tRNA = pseudouridine(55) in tRNA. In terms of biological role, responsible for synthesis of pseudouridine from uracil-54 and uracil-55 in the psi GC loop of transfer RNAs. In Pyrobaculum arsenaticum (strain DSM 13514 / JCM 11321 / PZ6), this protein is tRNA pseudouridine synthase Pus10.